A 374-amino-acid polypeptide reads, in one-letter code: Ferroptosis suppressor protein 1 (374 aa).

Gly-2 is lipidated: N-myristoyl glycine. A helical membrane pass occupies residues 13-35 (VVIVGGGFAGIAAATQLKSFGIP). 6-hydroxy-FAD is bound by residues 17–21 (GGGFA), Arg-53, and Val-81. Lys-167 bears the N6-acetyllysine mark. Position 285 (Asp-285) interacts with 6-hydroxy-FAD.

This sequence belongs to the FAD-dependent oxidoreductase family. Requires 6-hydroxy-FAD as cofactor. N-myristoylation at Gly-2 mediates the recruitment to lipid droplets and plasma membrane. In terms of processing, acetylation at Lys-167 prevents AIFM2 ubiquitination and degradation, thereby inhibiting ferroptosis. KAT2B mediates acetylation at Lys-167, while HDAC3 removes it. Post-translationally, ubiquitinated. AIFM2 undergoes 'Lys-29'-ubiquitination and proteasomal degradation, which is inhibited by acetylation at Lys-167.

The protein localises to the lipid droplet. It localises to the cell membrane. It is found in the cytoplasm. The protein resides in the mitochondrion membrane. Its subcellular location is the nucleus. It catalyses the reaction ubiquinone-10 + NADH + H(+) = ubiquinol-10 + NAD(+). The catalysed reaction is phylloquinone + NADH + H(+) = phylloquinol + NAD(+). The enzyme catalyses menaquinone-4 + NADH + H(+) = menaquinol-4 + NAD(+). It carries out the reaction menadione + NADH + H(+) = menadiol + NAD(+). With respect to regulation, the modification by 4-hydroxy-2-nonenal (HNE) adduction in mitochondria results in loss of the oxidoreductase activity and activation of a novel function in mitochondrial oxidative stress signaling. In terms of biological role, a NAD(P)H-dependent oxidoreductase that acts as a key inhibitor of ferroptosis. At the plasma membrane, catalyzes reduction of coenzyme Q/ubiquinone-10 to ubiquinol-10, a lipophilic radical-trapping antioxidant that prevents lipid oxidative damage and consequently ferroptosis. Acts in parallel to GPX4 to suppress phospholipid peroxidation and ferroptosis. This anti-ferroptotic function is independent of cellular glutathione levels. Also acts as a potent radical-trapping antioxidant by mediating warfarin-resistant vitamin K reduction in the canonical vitamin K cycle: catalyzes NAD(P)H-dependent reduction of vitamin K (phylloquinone, menaquinone-4 and menadione) to hydroquinone forms. Hydroquinones act as potent radical-trapping antioxidants inhibitor of phospholipid peroxidation and ferroptosis. May play a role in mitochondrial stress signaling. Upon oxidative stress, associates with the lipid peroxidation end product 4-hydroxy-2-nonenal (HNE) forming a lipid adduct devoid of oxidoreductase activity, which then translocates from mitochondria into the nucleus triggering DNA damage and cell death. The sequence is that of Ferroptosis suppressor protein 1 (aifm2) from Xenopus tropicalis (Western clawed frog).